The following is a 208-amino-acid chain: Type 4 adapter protein LvgA (208 aa).

The tract at residues 184-208 (GYGYPPESPRENYKHPVSSATTARK) is disordered.

As to quaternary structure, the T4BSS is a complex nanomachine composed of several subcomplexes. This subunit is part of the Type IV Coupling Complex (T4CC), a subcomplex composed of the DotLMNYZ core and the IcmSW-LvgA adapter subunits, linked by the C-terminal tail of DotL.

Its subcellular location is the cytoplasm. In terms of biological role, component of the Dot/Icm type IVB secretion system (T4BSS), which is used to inject bacterial effector proteins into eukaryotic host cells. Part of a subcomplex which recruits effector proteins and delivers them to the core transmembrane subcomplex. Is a critical subunit for binding a subset of effector proteins. Recognizes more than one type of binding motif. May be a critical factor that confers host specificity. Necessary for full virulence of the bacterium in guinea pigs and presumably humans. This chain is Type 4 adapter protein LvgA, found in Legionella pneumophila.